The sequence spans 270 residues: Bifunctional folate synthesis protein (270 aa).

The DHNA stretch occupies residues 1–119 (MDQLQIKDLE…TCSVTIHRRK (119 aa)). Residues Glu21, Tyr53, and 72–73 (IE) contribute to the substrate site. The active-site Proton donor/acceptor; for DHNA activity is the Lys99. The tract at residues 120–270 (QRAFIALGSN…IRNLYDALKK (151 aa)) is HPPK. Residues 160–163 (TEPW), 171–173 (FAN), 192–195 (LAIE), 200–215 (RVREVHWGPRLIDLDL), 227–233 (DLILPHP), and 238–240 (RLF) each bind ATP. Residues Asp212 and Asp214 each coordinate Mg(2+).

The protein in the N-terminal section; belongs to the DHNA family. This sequence in the C-terminal section; belongs to the HPPK family. Homotrimer or homotetramer.

The enzyme catalyses 7,8-dihydroneopterin = 6-hydroxymethyl-7,8-dihydropterin + glycolaldehyde. The catalysed reaction is 6-hydroxymethyl-7,8-dihydropterin + ATP = (7,8-dihydropterin-6-yl)methyl diphosphate + AMP + H(+). It participates in cofactor biosynthesis; tetrahydrofolate biosynthesis; 2-amino-4-hydroxy-6-hydroxymethyl-7,8-dihydropteridine diphosphate from 7,8-dihydroneopterin triphosphate: step 3/4. Its pathway is cofactor biosynthesis; tetrahydrofolate biosynthesis; 2-amino-4-hydroxy-6-hydroxymethyl-7,8-dihydropteridine diphosphate from 7,8-dihydroneopterin triphosphate: step 4/4. Its function is as follows. Catalyzes two sequential steps of tetrahydrofolate biosynthesis, the conversion of 7,8-dihydroneopterin to 6-hydroxymethyl-7,8-dihydropterin diphosphate. This chain is Bifunctional folate synthesis protein, found in Streptococcus pneumoniae serotype 4 (strain ATCC BAA-334 / TIGR4).